Consider the following 494-residue polypeptide: Guanosine-5'-triphosphate,3'-diphosphate pyrophosphatase (494 aa).

It belongs to the GppA/Ppx family. GppA subfamily.

The enzyme catalyses guanosine 3'-diphosphate 5'-triphosphate + H2O = guanosine 3',5'-bis(diphosphate) + phosphate + H(+). It participates in purine metabolism; ppGpp biosynthesis; ppGpp from GTP: step 2/2. Functionally, catalyzes the conversion of pppGpp to ppGpp. Guanosine pentaphosphate (pppGpp) is a cytoplasmic signaling molecule which together with ppGpp controls the 'stringent response', an adaptive process that allows bacteria to respond to amino acid starvation, resulting in the coordinated regulation of numerous cellular activities. The protein is Guanosine-5'-triphosphate,3'-diphosphate pyrophosphatase of Erwinia tasmaniensis (strain DSM 17950 / CFBP 7177 / CIP 109463 / NCPPB 4357 / Et1/99).